The following is a 350-amino-acid chain: Phosphotriesterase-related protein (350 aa).

A divalent metal cation-binding residues include His-22, His-24, Glu-169, His-201, His-230, and Asp-298.

It belongs to the metallo-dependent hydrolases superfamily. Phosphotriesterase family. The cofactor is a divalent metal cation.

The protein is Phosphotriesterase-related protein of Drosophila persimilis (Fruit fly).